The following is a 544-amino-acid chain: U1 small nuclear ribonucleoprotein component PRP42 (544 aa).

HAT repeat units lie at residues 7–39 (LIHD…YIVK), 51–83 (QLLK…LEYK), 85–118 (GNVS…FCNN), 121–156 (SHQK…QISS), and 163–195 (KYWN…DIMD). Residues 230–235 (KKKLKK) carry the Nuclear localization signal motif. HAT repeat units follow at residues 255–288 (FESK…YTIT), 290–322 (QTDS…WLIN), 366–397 (NLLE…FKTF), and 456–488 (VEKN…LIYF).

In terms of assembly, component of the 18S U1 snRNP particle, a subcomplex of the spliceosome.

It localises to the nucleus. Its function is as follows. Essential component of the U1 snRNP particle, which recognizes and binds the 5'-splice site of pre-mRNA. Together with other non-snRNP factors, U1 snRNP forms the spliceosomal commitment complex, that targets pre-mRNA to the splicing pathway. U1 snRNP is cotranscriptionally recruited to intron-containing genes. Required for U1 snRNP biogenesis. The sequence is that of U1 small nuclear ribonucleoprotein component PRP42 (PRP42) from Saccharomyces cerevisiae (strain ATCC 204508 / S288c) (Baker's yeast).